A 164-amino-acid chain; its full sequence is MTIAIYAGSFDPVTNGHIDVLKGALRLADQVIVAIGMHPGKKPLFSFDERVALIEASAKAVLHKDAARVSVIAFDGLVIDAARKHGAQLMVRGLRDGTDLDYEMQMAGMNGTMAPELQTVFLPADPAVRTITATLVRQIASMGGDIKPFVPVPVAAALNTKFKS.

Ser9 is a binding site for substrate. ATP is bound by residues 9–10 (SF) and His17. Substrate-binding residues include Lys41, Val78, and Arg92. ATP contacts are provided by residues 93–95 (GLR), Glu103, and 128–134 (VRTITAT).

The protein belongs to the bacterial CoaD family. As to quaternary structure, homohexamer. Requires Mg(2+) as cofactor.

It localises to the cytoplasm. It carries out the reaction (R)-4'-phosphopantetheine + ATP + H(+) = 3'-dephospho-CoA + diphosphate. It participates in cofactor biosynthesis; coenzyme A biosynthesis; CoA from (R)-pantothenate: step 4/5. Its function is as follows. Reversibly transfers an adenylyl group from ATP to 4'-phosphopantetheine, yielding dephospho-CoA (dPCoA) and pyrophosphate. In Brucella suis (strain ATCC 23445 / NCTC 10510), this protein is Phosphopantetheine adenylyltransferase.